A 137-amino-acid chain; its full sequence is UPF0146 protein MJ0688 (137 aa).

The protein belongs to the UPF0146 family.

The polypeptide is UPF0146 protein MJ0688 (Methanocaldococcus jannaschii (strain ATCC 43067 / DSM 2661 / JAL-1 / JCM 10045 / NBRC 100440) (Methanococcus jannaschii)).